The sequence spans 86 residues: UPF0437 protein Ava_4254 (86 aa).

It belongs to the UPF0437 family.

The protein is UPF0437 protein Ava_4254 of Trichormus variabilis (strain ATCC 29413 / PCC 7937) (Anabaena variabilis).